The primary structure comprises 259 residues: Acyl-[acyl-carrier-protein]--UDP-N-acetylglucosamine O-acyltransferase (259 aa).

This sequence belongs to the transferase hexapeptide repeat family. LpxA subfamily. As to quaternary structure, homotrimer.

Its subcellular location is the cytoplasm. It carries out the reaction a (3R)-hydroxyacyl-[ACP] + UDP-N-acetyl-alpha-D-glucosamine = a UDP-3-O-[(3R)-3-hydroxyacyl]-N-acetyl-alpha-D-glucosamine + holo-[ACP]. Its pathway is glycolipid biosynthesis; lipid IV(A) biosynthesis; lipid IV(A) from (3R)-3-hydroxytetradecanoyl-[acyl-carrier-protein] and UDP-N-acetyl-alpha-D-glucosamine: step 1/6. In terms of biological role, involved in the biosynthesis of lipid A, a phosphorylated glycolipid that anchors the lipopolysaccharide to the outer membrane of the cell. The polypeptide is Acyl-[acyl-carrier-protein]--UDP-N-acetylglucosamine O-acyltransferase (Psychrobacter cryohalolentis (strain ATCC BAA-1226 / DSM 17306 / VKM B-2378 / K5)).